The sequence spans 298 residues: Chitin deacetylase (298 aa).

Residues 1-16 (MLAPLFAALLAGAATA) form the signal peptide. Residues 39–222 (NTFALTFDDG…AIKAKGLTPV (184 aa)) enclose the NodB homology domain. The Proton acceptor role is filled by Asp-46. Asp-46 contacts acetate. Residues Asp-47, His-99, and His-103 each coordinate Co(2+). Residue Tyr-140 participates in acetate binding. His-196 serves as the catalytic Proton donor. In terms of domain architecture, Chitin-binding type-1 spans 256–298 (DDTCGGSNGYVCQNSQCCSQWGWCGTTSEYCAAGCQAAYGPCT). 4 cysteine pairs are disulfide-bonded: Cys-259/Cys-273, Cys-267/Cys-279, Cys-272/Cys-286, and Cys-290/Cys-297.

This sequence belongs to the polysaccharide deacetylase family. The cofactor is Co(2+).

The protein localises to the secreted. The enzyme catalyses [(1-&gt;4)-N-acetyl-beta-D-glucosaminyl](n) + n H2O = chitosan + n acetate. With respect to regulation, inhibited by Fe(2+) and to a lesser extent by Mn(2+). Functionally, hydrolyzes the N-acetamido groups of N-acetyl-D-glucosamine polymers in chitin to form chitosan and acetate. May play a role in evasion of the host immune response; plant chitinases liberate chitin molecules from the fungal cell wall which act as elicitors of the plant immune response, deacetylation of the liberated chitin neutralizes elicitor activity. This chain is Chitin deacetylase, found in Pestalotiopsis sp.